Here is a 385-residue protein sequence, read N- to C-terminus: 1-deoxy-D-xylulose 5-phosphate reductoisomerase (385 aa).

NADPH is bound by residues T10, G11, S12, I13, K37, and N124. Residue K125 coordinates 1-deoxy-D-xylulose 5-phosphate. An NADPH-binding site is contributed by E126. D150 contributes to the Mn(2+) binding site. Residues S151, E152, S176, and H199 each contribute to the 1-deoxy-D-xylulose 5-phosphate site. E152 lines the Mn(2+) pocket. G205 is a binding site for NADPH. 4 residues coordinate 1-deoxy-D-xylulose 5-phosphate: S212, N217, K218, and E221. E221 is a binding site for Mn(2+).

Belongs to the DXR family. Mg(2+) serves as cofactor. It depends on Mn(2+) as a cofactor.

It carries out the reaction 2-C-methyl-D-erythritol 4-phosphate + NADP(+) = 1-deoxy-D-xylulose 5-phosphate + NADPH + H(+). The protein operates within isoprenoid biosynthesis; isopentenyl diphosphate biosynthesis via DXP pathway; isopentenyl diphosphate from 1-deoxy-D-xylulose 5-phosphate: step 1/6. Functionally, catalyzes the NADPH-dependent rearrangement and reduction of 1-deoxy-D-xylulose-5-phosphate (DXP) to 2-C-methyl-D-erythritol 4-phosphate (MEP). The sequence is that of 1-deoxy-D-xylulose 5-phosphate reductoisomerase from Clostridium botulinum (strain ATCC 19397 / Type A).